A 654-amino-acid chain; its full sequence is Tetratricopeptide repeat protein 30 homolog (654 aa).

TPR repeat units lie at residues Glu-10 to Arg-43, Ala-44 to Glu-76, Ala-143 to Asn-176, Leu-178 to Asn-210, Leu-384 to Val-417, Ala-449 to Asp-483, and Cys-533 to Gly-566.

The protein belongs to the TTC30/dfy-1/fleer family.

It localises to the cell projection. Its subcellular location is the cilium. In terms of biological role, required for polyglutamylation of axonemal tubulin in sensory cilia. Plays a role in anterograde intraflagellar transport (IFT), the process by which cilia precursors are transported from the base of the cilium to the site of their incorporation at the tip. This chain is Tetratricopeptide repeat protein 30 homolog, found in Drosophila pseudoobscura pseudoobscura (Fruit fly).